A 473-amino-acid chain; its full sequence is Pup--protein ligase (473 aa).

Glutamate 9 is a binding site for Mg(2+). ATP is bound at residue arginine 54. Position 56 (tyrosine 56) interacts with Mg(2+). The active-site Proton acceptor is aspartate 58. Glutamate 64 is a Mg(2+) binding site. 2 residues coordinate ATP: threonine 67 and tryptophan 425.

The protein belongs to the Pup ligase/Pup deamidase family. Pup-conjugating enzyme subfamily.

The catalysed reaction is ATP + [prokaryotic ubiquitin-like protein]-L-glutamate + [protein]-L-lysine = ADP + phosphate + N(6)-([prokaryotic ubiquitin-like protein]-gamma-L-glutamyl)-[protein]-L-lysine.. It participates in protein degradation; proteasomal Pup-dependent pathway. It functions in the pathway protein modification; protein pupylation. Catalyzes the covalent attachment of the prokaryotic ubiquitin-like protein modifier Pup to the proteasomal substrate proteins, thereby targeting them for proteasomal degradation. This tagging system is termed pupylation. The ligation reaction involves the side-chain carboxylate of the C-terminal glutamate of Pup and the side-chain amino group of a substrate lysine. The chain is Pup--protein ligase from Brachybacterium faecium (strain ATCC 43885 / DSM 4810 / JCM 11609 / LMG 19847 / NBRC 14762 / NCIMB 9860 / 6-10).